The following is a 204-amino-acid chain: U1 small nuclear ribonucleoprotein C (204 aa).

Residues 4 to 36 (FFCDYCDVYLTHDSMSVRKAHNSGRNHLRNVVD) form a Matrin-type zinc finger. A disordered region spans residues 65 to 204 (ANPMLPQNQP…GAGAPGHEKR (140 aa)). Pro residues-rich tracts occupy residues 77 to 154 (GFPP…PGAP) and 166 to 192 (APPPFPGLPGMPPPGQGFPPGGPPGFA).

It belongs to the U1 small nuclear ribonucleoprotein C family. In terms of assembly, U1 snRNP is composed of the 7 core Sm proteins B/B', D1, D2, D3, E, F and G that assemble in a heptameric protein ring on the Sm site of the small nuclear RNA to form the core snRNP, and at least 3 U1 snRNP-specific proteins U1-70K, U1-A and U1-C. U1-C interacts with U1 snRNA and the 5' splice-site region of the pre-mRNA.

The protein localises to the nucleus. In terms of biological role, component of the spliceosomal U1 snRNP, which is essential for recognition of the pre-mRNA 5' splice-site and the subsequent assembly of the spliceosome. U1-C is directly involved in initial 5' splice-site recognition for both constitutive and regulated alternative splicing. The interaction with the 5' splice-site seems to precede base-pairing between the pre-mRNA and the U1 snRNA. Stimulates commitment or early (E) complex formation by stabilizing the base pairing of the 5' end of the U1 snRNA and the 5' splice-site region. This chain is U1 small nuclear ribonucleoprotein C, found in Fusarium vanettenii (strain ATCC MYA-4622 / CBS 123669 / FGSC 9596 / NRRL 45880 / 77-13-4) (Fusarium solani subsp. pisi).